The following is a 224-amino-acid chain: UPF0173 metal-dependent hydrolase EF_1371 (224 aa).

The protein belongs to the UPF0173 family.

The sequence is that of UPF0173 metal-dependent hydrolase EF_1371 from Enterococcus faecalis (strain ATCC 700802 / V583).